Here is a 75-residue protein sequence, read N- to C-terminus: Protein SlyX homolog (75 aa).

It belongs to the SlyX family.

In Vibrio vulnificus (strain CMCP6), this protein is Protein SlyX homolog.